Consider the following 321-residue polypeptide: Probable arabinan endo-1,5-alpha-L-arabinosidase A (321 aa).

Residues 1–19 (MSASVFVVVASCLAALAHG) form the signal peptide. The active-site Proton acceptor is Asp34. Residue Glu200 is the Proton donor of the active site.

This sequence belongs to the glycosyl hydrolase 43 family.

The protein resides in the secreted. The enzyme catalyses Endohydrolysis of (1-&gt;5)-alpha-arabinofuranosidic linkages in (1-&gt;5)-arabinans.. Its pathway is glycan metabolism; L-arabinan degradation. Its function is as follows. Endo-1,5-alpha-L-arabinanase involved in degradation of pectin. Its preferred substrate is linear 1,5-alpha-L-arabinan. The protein is Probable arabinan endo-1,5-alpha-L-arabinosidase A (abnA) of Aspergillus fumigatus (strain ATCC MYA-4609 / CBS 101355 / FGSC A1100 / Af293) (Neosartorya fumigata).